The sequence spans 351 residues: MPGAAAKGSELSERIESFVEALKRGGGRRSSEDMARETLGLLRRIITDHRWSNAGELMELIRREGRRMTAAQPSETTVGNMVRRVLRIIREEYGRLHGRSDESDQQESLHKLLTSGGLSEDFRSHYAQLQSNIIEAINELLVELEGTTENIAAQALEHIHSNEVIMTIGFSRTVEAFLREAARKRKFHVIVAECAPFCQGHEMAVNLSKAGIETTVMTDAAIFAVMSRVNKVIIGTKTILANGALRAVAGTHTLALAAKHHSTPLIVCAPMFKLSPQFPNEEDSFHKFVAPEEVLPFTEGDILEKVSVHCPVFDYVPPELITLFISNIGGNAPSYIYRLMSELYHPDDHVL.

It belongs to the eIF-2B alpha/beta/delta subunits family. Component of the translation initiation factor 2B (eIF2B) complex which is a heterodecamer of two sets of five different subunits: alpha, beta, gamma, delta and epsilon. Subunits alpha, beta and delta comprise a regulatory subcomplex and subunits epsilon and gamma comprise a catalytic subcomplex. Within the complex, the hexameric regulatory complex resides at the center, with the two heterodimeric catalytic subcomplexes bound on opposite sides.

The protein resides in the cytoplasm. Its subcellular location is the cytosol. Its activity is regulated as follows. Activated by the chemical integrated stress response (ISR) inhibitor ISRIB which stimulates guanine nucleotide exchange factor activity for both phosphorylated and unphosphorylated eIF2. In terms of biological role, acts as a component of the translation initiation factor 2B (eIF2B) complex, which catalyzes the exchange of GDP for GTP on eukaryotic initiation factor 2 (eIF2) gamma subunit. Its guanine nucleotide exchange factor activity is repressed when bound to eIF2 complex phosphorylated on the alpha subunit, thereby limiting the amount of methionyl-initiator methionine tRNA available to the ribosome and consequently global translation is repressed. This chain is Translation initiation factor eIF2B subunit beta (EIF2B2), found in Bos taurus (Bovine).